The chain runs to 218 residues: Phosphatidylserine decarboxylase proenzyme (218 aa).

The Schiff-base intermediate with substrate; via pyruvic acid role is filled by Ser-187. Ser-187 carries the pyruvic acid (Ser); by autocatalysis modification.

It belongs to the phosphatidylserine decarboxylase family. PSD-A subfamily. In terms of assembly, heterodimer of a large membrane-associated beta subunit and a small pyruvoyl-containing alpha subunit. Pyruvate is required as a cofactor. In terms of processing, is synthesized initially as an inactive proenzyme. Formation of the active enzyme involves a self-maturation process in which the active site pyruvoyl group is generated from an internal serine residue via an autocatalytic post-translational modification. Two non-identical subunits are generated from the proenzyme in this reaction, and the pyruvate is formed at the N-terminus of the alpha chain, which is derived from the carboxyl end of the proenzyme. The post-translation cleavage follows an unusual pathway, termed non-hydrolytic serinolysis, in which the side chain hydroxyl group of the serine supplies its oxygen atom to form the C-terminus of the beta chain, while the remainder of the serine residue undergoes an oxidative deamination to produce ammonia and the pyruvoyl prosthetic group on the alpha chain.

It is found in the cell membrane. It catalyses the reaction a 1,2-diacyl-sn-glycero-3-phospho-L-serine + H(+) = a 1,2-diacyl-sn-glycero-3-phosphoethanolamine + CO2. It functions in the pathway phospholipid metabolism; phosphatidylethanolamine biosynthesis; phosphatidylethanolamine from CDP-diacylglycerol: step 2/2. Catalyzes the formation of phosphatidylethanolamine (PtdEtn) from phosphatidylserine (PtdSer). This chain is Phosphatidylserine decarboxylase proenzyme, found in Geobacter sulfurreducens (strain ATCC 51573 / DSM 12127 / PCA).